A 543-amino-acid chain; its full sequence is Oxalate--CoA ligase (543 aa).

196 to 207 (HTSGTTSTPKTV) serves as a coordination point for ATP. An FACS motif is present at residues 410 to 458 (ENYFRTGDQGYFDPEGFLVLTGRIKELINRGGEKISPIELDGIMLSHPK). The short motif at 541–543 (SKL) is the C-terminal peroxisome targeting signal (PTS1) element.

This sequence belongs to the ATP-dependent AMP-binding enzyme family. As to quaternary structure, interacts with PEX5.

It localises to the peroxisome matrix. It is found in the peroxisome membrane. It carries out the reaction oxalate + ATP + CoA = oxalyl-CoA + AMP + diphosphate. In terms of biological role, catalyzes the first step in a degradation pathway of oxalate to CO(2) to protect the cell against the harmful effects of oxalate derived from endogenous processes or an environmental sources. This chain is Oxalate--CoA ligase, found in Saccharomyces cerevisiae (strain ATCC 204508 / S288c) (Baker's yeast).